Reading from the N-terminus, the 660-residue chain is Bifunctional polymyxin resistance protein ArnA (660 aa).

Residues 1–304 (MKAVIFAYHD…TLGLVAGARL (304 aa)) are formyltransferase ArnAFT. The active-site Proton donor; for formyltransferase activity is the His-104. Residues Arg-114 and 136 to 140 (VKRAD) each bind (6R)-10-formyltetrahydrofolate. The dehydrogenase ArnADH stretch occupies residues 314–660 (RRIRVLILGV…RSVDIAERAS (347 aa)). NAD(+) is bound by residues Asp-347 and 368 to 369 (DI). UDP-alpha-D-glucuronate is bound by residues Ala-393, Tyr-398, and 432–433 (TS). Catalysis depends on Glu-434, which acts as the Proton acceptor; for decarboxylase activity. UDP-alpha-D-glucuronate-binding positions include Arg-460, Asn-492, 526–535 (KLIDGGQQKR), and Tyr-613. Catalysis depends on Arg-619, which acts as the Proton donor; for decarboxylase activity.

In the N-terminal section; belongs to the Fmt family. UDP-L-Ara4N formyltransferase subfamily. This sequence in the C-terminal section; belongs to the NAD(P)-dependent epimerase/dehydratase family. UDP-glucuronic acid decarboxylase subfamily. In terms of assembly, homohexamer, formed by a dimer of trimers.

The catalysed reaction is UDP-alpha-D-glucuronate + NAD(+) = UDP-beta-L-threo-pentopyranos-4-ulose + CO2 + NADH. It carries out the reaction UDP-4-amino-4-deoxy-beta-L-arabinose + (6R)-10-formyltetrahydrofolate = UDP-4-deoxy-4-formamido-beta-L-arabinose + (6S)-5,6,7,8-tetrahydrofolate + H(+). The protein operates within nucleotide-sugar biosynthesis; UDP-4-deoxy-4-formamido-beta-L-arabinose biosynthesis; UDP-4-deoxy-4-formamido-beta-L-arabinose from UDP-alpha-D-glucuronate: step 1/3. It participates in nucleotide-sugar biosynthesis; UDP-4-deoxy-4-formamido-beta-L-arabinose biosynthesis; UDP-4-deoxy-4-formamido-beta-L-arabinose from UDP-alpha-D-glucuronate: step 3/3. Its pathway is bacterial outer membrane biogenesis; lipopolysaccharide biosynthesis. Functionally, bifunctional enzyme that catalyzes the oxidative decarboxylation of UDP-glucuronic acid (UDP-GlcUA) to UDP-4-keto-arabinose (UDP-Ara4O) and the addition of a formyl group to UDP-4-amino-4-deoxy-L-arabinose (UDP-L-Ara4N) to form UDP-L-4-formamido-arabinose (UDP-L-Ara4FN). The modified arabinose is attached to lipid A and is required for resistance to polymyxin and cationic antimicrobial peptides. The polypeptide is Bifunctional polymyxin resistance protein ArnA (Salmonella schwarzengrund (strain CVM19633)).